We begin with the raw amino-acid sequence, 272 residues long: uncharacterized protein (272 aa).

Belongs to the sodium:galactoside symporter (TC 2.A.2) family.

This is an uncharacterized protein from Pseudescherichia vulneris (Escherichia vulneris).